The following is a 163-amino-acid chain: 3-hydroxyacyl-[acyl-carrier-protein] dehydratase FabZ (163 aa).

Residue H58 is part of the active site.

Belongs to the thioester dehydratase family. FabZ subfamily.

It is found in the cytoplasm. It catalyses the reaction a (3R)-hydroxyacyl-[ACP] = a (2E)-enoyl-[ACP] + H2O. Its function is as follows. Involved in unsaturated fatty acids biosynthesis. Catalyzes the dehydration of short chain beta-hydroxyacyl-ACPs and long chain saturated and unsaturated beta-hydroxyacyl-ACPs. This Francisella tularensis subsp. tularensis (strain FSC 198) protein is 3-hydroxyacyl-[acyl-carrier-protein] dehydratase FabZ.